Consider the following 224-residue polypeptide: 7-cyano-7-deazaguanine synthase (224 aa).

12–22 (MSGGMDSTLGA) is a binding site for ATP. Residues Cys-191, Cys-199, Cys-202, and Cys-205 each coordinate Zn(2+).

Belongs to the QueC family. Zn(2+) is required as a cofactor.

The catalysed reaction is 7-carboxy-7-deazaguanine + NH4(+) + ATP = 7-cyano-7-deazaguanine + ADP + phosphate + H2O + H(+). The protein operates within purine metabolism; 7-cyano-7-deazaguanine biosynthesis. Catalyzes the ATP-dependent conversion of 7-carboxy-7-deazaguanine (CDG) to 7-cyano-7-deazaguanine (preQ(0)). The chain is 7-cyano-7-deazaguanine synthase from Sulfurimonas denitrificans (strain ATCC 33889 / DSM 1251) (Thiomicrospira denitrificans (strain ATCC 33889 / DSM 1251)).